The chain runs to 2118 residues: Separin (2118 aa).

S1121 is subject to Phosphoserine. The span at 1309 to 1318 (KCSGRGRRRI) shows a compositional bias: basic residues. The segment at 1309–1352 (KCSGRGRRRIASVPPPLHNSSQKGLEEEGPPCTPKPPGRARQAG) is disordered. Residues S1391 and S1394 each carry the phosphoserine modification. The tract at residues 1408 to 1428 (EEPKRRGTASRTRGQTRKGRS) is disordered. S1504 is subject to Phosphoserine. The region spanning 1941–2036 (PQNTFYVLNP…SAALAVHGNL (96 aa)) is the Peptidase C50 domain. The active site involves C2025.

In terms of assembly, interacts with PTTG1. Interacts with RAD21. In terms of processing, autocleaves. This function, which is not essential for its protease activity, is unknown. Post-translationally, phosphorylated by CDK1. There is 8 Ser/Thr phosphorylation sites. Among them, only Ser-1121 phosphorylation is the major site, which conducts to the enzyme inactivation.

It localises to the cytoplasm. Its subcellular location is the nucleus. It catalyses the reaction All bonds known to be hydrolyzed by this endopeptidase have arginine in P1 and an acidic residue in P4. P6 is often occupied by an acidic residue or by a hydroxy-amino-acid residue, the phosphorylation of which enhances cleavage.. Regulated by at least two independent mechanisms. First, it is inactivated via its interaction with securin/PTTG1, which probably covers its active site. The association with PTTG1 is not only inhibitory, since PTTG1 is also required for activating it, the enzyme being inactive in cells in which PTTG1 is absent. PTTG1 degradation at anaphase, liberates it and triggers RAD21 cleavage. Second, phosphorylation at Ser-1121 inactivates it. The complete phosphorylation during mitosis, is removed when cells undergo anaphase. Activation of the enzyme at the metaphase-anaphase transition probably requires the removal of both securin and inhibitory phosphate. Its function is as follows. Caspase-like protease, which plays a central role in the chromosome segregation by cleaving the SCC1/RAD21 subunit of the cohesin complex at the onset of anaphase. During most of the cell cycle, it is inactivated by different mechanisms. The sequence is that of Separin (Espl1) from Mus musculus (Mouse).